The following is a 484-amino-acid chain: Cysteine--tRNA ligase (484 aa).

Cys29 serves as a coordination point for Zn(2+). The short motif at 31–41 is the 'HIGH' region element; the sequence is PTVQSAPHIGH. Residues Cys219, His244, and Glu248 each coordinate Zn(2+). The short motif at 275-279 is the 'KMSKS' region element; it reads KMSKS. Lys278 is an ATP binding site.

It belongs to the class-I aminoacyl-tRNA synthetase family. As to quaternary structure, monomer. Zn(2+) is required as a cofactor.

The protein resides in the cytoplasm. The catalysed reaction is tRNA(Cys) + L-cysteine + ATP = L-cysteinyl-tRNA(Cys) + AMP + diphosphate. The protein is Cysteine--tRNA ligase of Clavibacter sepedonicus (Clavibacter michiganensis subsp. sepedonicus).